The primary structure comprises 1718 residues: PR domain zinc finger protein 2 (1718 aa).

The region spanning 28-141 (EEVRLFPSAV…PGEELLVWYN (114 aa)) is the SET domain. A disordered region spans residues 155–335 (ERASARSKRS…TSEETLEDCS (181 aa)). Residues 159–173 (ARSKRSSPKSRKGKK) show a composition bias toward basic residues. Polar residues predominate over residues 189–202 (QLKTSEPDFTSANM). Positions 204–216 (DSAEGPKEDEEKP) are enriched in basic and acidic residues. The segment covering 265–297 (DLGEEEEEEEEEDEEEEEDDDDDELEDEGEEEA) has biased composition (acidic residues). The retinoblastoma protein binding stretch occupies residues 294–316 (EEEASMPNENSVKEPEIRCDEKP). The span at 304–327 (SVKEPEIRCDEKPEDLLEEPKTTS) shows a compositional bias: basic and acidic residues. Residue lysine 347 forms a Glycyl lysine isopeptide (Lys-Gly) (interchain with G-Cter in SUMO2) linkage. 2 C2H2-type zinc fingers span residues 360–382 (FPCQHCERKFTTKQGLERHMHIH) and 390–412 (FKCKYCGKAFGTQINRRRHERRH). Residues 405-457 (RRRHERRHEAGLKRKPSQTLQPSEDLADGKASGENVASKDDSSPPSLGPDCLI) are disordered. Serine 421 carries the post-translational modification Phosphoserine. The C2H2-type 3 zinc finger occupies 483 to 506 (HPCKYCKKVFGTHTNMRRHQRRVH). 2 disordered regions span residues 513–550 (KGVRRKGGLEEPQPPAEQAQATQNVYVPSTEPEEEGEA) and 622–660 (EDLPKEPLGSTNSEAKKRRTASPPALPKIKAETDSDPMV). Serine 643 is subject to Phosphoserine. Residues lysine 651, lysine 690, and lysine 692 each participate in a glycyl lysine isopeptide (Lys-Gly) (interchain with G-Cter in SUMO2) cross-link. A disordered region spans residues 729–797 (TSSRFKRRTS…GRDERETVSP (69 aa)). A compositionally biased stretch (low complexity) spans 738–748 (SSPPSSPQHSP). Serine 743 bears the Phosphoserine mark. Lysine 774 participates in a covalent cross-link: Glycyl lysine isopeptide (Lys-Gly) (interchain with G-Cter in SUMO2). Phosphoserine occurs at positions 781, 785, and 796. Residues lysine 866 and lysine 879 each participate in a glycyl lysine isopeptide (Lys-Gly) (interchain with G-Cter in SUMO2) cross-link. Residues 903-1083 (VENPADGTRS…SPPPLSAISS (181 aa)) are disordered. The segment covering 951–969 (LQTPSLSSGQLPPLLIPTD) has biased composition (low complexity). 2 consecutive short sequence motifs (SH3-binding) follow at residues 970 to 979 (PSSPPPCPPV) and 985 to 998 (PPPPLLPTVPLPAP). Residues 970 to 997 (PSSPPPCPPVLTVATPPPPLLPTVPLPA) are compositionally biased toward pro residues. A compositionally biased stretch (low complexity) spans 1018-1027 (SPLPILSPTV). Positions 1028-1038 (SPSPSPIPPVE) are enriched in pro residues. Residues 1028–1052 (SPSPSPIPPVEPLMSAASPGPPTLS) carry the SH3-binding motif. The span at 1042-1072 (SAASPGPPTLSSSSSSSSSSSSFSSSSSSSS) shows a compositional bias: low complexity. C2H2-type zinc fingers lie at residues 1134-1156 (FVCNVCESPFLSIKDLTKHLSIH), 1162-1185 (FKCEFCVQLFKDKTDLSEHRFLLH), and 1191-1214 (FVCSVCKKEFAFLCNLQQHQRDLH). Residues lysine 1147 and lysine 1151 each participate in a glycyl lysine isopeptide (Lys-Gly) (interchain with G-Cter in SUMO2) cross-link. Residues 1244–1265 (HMQSLPEDPLETSKEEEELNDS) form a disordered region. Residues 1251–1265 (DPLETSKEEEELNDS) are compositionally biased toward acidic residues. Glycyl lysine isopeptide (Lys-Gly) (interchain with G-Cter in SUMO2) cross-links involve residues lysine 1257 and lysine 1281. The segment at 1333–1355 (IRCTKCGKGVDNMPELHKHILAC) adopts a C2H2-type 7; atypical zinc-finger fold. The C2H2-type 8; atypical zinc finger occupies 1455–1478 (HICPYCNREFTYIGSLNKHAAFSC). Disordered stretches follow at residues 1478 to 1576 (CPKK…LRNS), 1589 to 1612 (GKKPKAVAKNHSAQLSSKTSRSLH), and 1625 to 1652 (KSTLASKKRTDRFNIKSRERSGGPVTRS). A compositionally biased stretch (basic residues) spans 1486 to 1498 (PKKKVSHSSKKGG). Positions 1499–1511 (HSSPASSDKNSNS) are enriched in low complexity. Polar residues-rich tracts occupy residues 1525 to 1556 (QSMQTPLGKTRARSSGPTQVPLPSSSFRSKQN) and 1599 to 1608 (HSAQLSSKTS). Residues 1635–1645 (DRFNIKSRERS) show a composition bias toward basic and acidic residues.

It belongs to the class V-like SAM-binding methyltransferase superfamily. In terms of assembly, binds to the retinoblastoma protein (RB). Interacts with GATA3. In terms of tissue distribution, highly expressed in retinoblastoma cell lines and in brain tumors. Also expressed in a number of other cell lines and in brain, heart, skeletal muscle, liver and spleen. Isoform 1 is expressed in testis at much higher level than isoform 3.

Its subcellular location is the nucleus. The enzyme catalyses L-lysyl(9)-[histone H3] + 3 S-adenosyl-L-methionine = N(6),N(6),N(6)-trimethyl-L-lysyl(9)-[histone H3] + 3 S-adenosyl-L-homocysteine + 3 H(+). In terms of biological role, S-adenosyl-L-methionine-dependent histone methyltransferase that specifically methylates 'Lys-9' of histone H3. May function as a DNA-binding transcription factor. Binds to the macrophage-specific TPA-responsive element (MTE) of the HMOX1 (heme oxygenase 1) gene and may act as a transcriptional activator of this gene. The protein is PR domain zinc finger protein 2 (PRDM2) of Homo sapiens (Human).